A 340-amino-acid polypeptide reads, in one-letter code: Ribosomal RNA large subunit methyltransferase F (340 aa).

Residues 1-36 are disordered; it reads MNAPRTPKPARKKPDSATPAKPVEPRKEASLHPRNR.

This sequence belongs to the methyltransferase superfamily. METTL16/RlmF family.

It is found in the cytoplasm. It catalyses the reaction adenosine(1618) in 23S rRNA + S-adenosyl-L-methionine = N(6)-methyladenosine(1618) in 23S rRNA + S-adenosyl-L-homocysteine + H(+). Specifically methylates the adenine in position 1618 of 23S rRNA. This Pseudomonas fluorescens (strain Pf0-1) protein is Ribosomal RNA large subunit methyltransferase F.